A 504-amino-acid chain; its full sequence is Cytochrome P450 2D1 (504 aa).

Cys446 contacts heme.

Belongs to the cytochrome P450 family. Requires heme as cofactor.

The protein localises to the endoplasmic reticulum membrane. It localises to the microsome membrane. It carries out the reaction an organic molecule + reduced [NADPH--hemoprotein reductase] + O2 = an alcohol + oxidized [NADPH--hemoprotein reductase] + H2O + H(+). In terms of biological role, cytochromes P450 are a group of heme-thiolate monooxygenases. In liver microsomes, this enzyme is involved in an NADPH-dependent electron transport pathway. It oxidizes a variety of structurally unrelated compounds, including steroids, fatty acids, and xenobiotics. The sequence is that of Cytochrome P450 2D1 (Cyp2d1) from Rattus norvegicus (Rat).